Reading from the N-terminus, the 968-residue chain is Glycine dehydrogenase (decarboxylating) (968 aa).

An N6-(pyridoxal phosphate)lysine modification is found at lysine 712.

Belongs to the GcvP family. As to quaternary structure, the glycine cleavage system is composed of four proteins: P, T, L and H. It depends on pyridoxal 5'-phosphate as a cofactor.

It carries out the reaction N(6)-[(R)-lipoyl]-L-lysyl-[glycine-cleavage complex H protein] + glycine + H(+) = N(6)-[(R)-S(8)-aminomethyldihydrolipoyl]-L-lysyl-[glycine-cleavage complex H protein] + CO2. Functionally, the glycine cleavage system catalyzes the degradation of glycine. The P protein binds the alpha-amino group of glycine through its pyridoxal phosphate cofactor; CO(2) is released and the remaining methylamine moiety is then transferred to the lipoamide cofactor of the H protein. The chain is Glycine dehydrogenase (decarboxylating) from Prochlorococcus marinus (strain NATL2A).